Consider the following 674-residue polypeptide: ATP-dependent DNA helicase Rep (674 aa).

In terms of domain architecture, UvrD-like helicase ATP-binding spans 1–280; that stretch reads MRLNPGQQHA…IKLEQNYRSS (280 aa). ATP is bound by residues 22–29 and Arg278; that span reads AGAGSGKT. A UvrD-like helicase C-terminal domain is found at 281-562; it reads GRILKAANIL…QLMTLHASKG (282 aa).

The protein belongs to the helicase family. UvrD subfamily. Homodimer.

The enzyme catalyses Couples ATP hydrolysis with the unwinding of duplex DNA by translocating in the 3'-5' direction.. It catalyses the reaction ATP + H2O = ADP + phosphate + H(+). In terms of biological role, rep helicase is a single-stranded DNA-dependent ATPase involved in DNA replication; it can initiate unwinding at a nick in the DNA. It binds to the single-stranded DNA and acts in a progressive fashion along the DNA in the 3' to 5' direction. This chain is ATP-dependent DNA helicase Rep, found in Salmonella typhimurium (strain LT2 / SGSC1412 / ATCC 700720).